Here is an 86-residue protein sequence, read N- to C-terminus: Evasin-3 (86 aa).

The first 20 residues, 1 to 20 (MRALLARLLLCVLVVSDSKG), serve as a signal peptide directing secretion. Disulfide bonds link Cys42–Cys57, Cys46–Cys59, and Cys53–Cys70. Asn45 carries N-linked (GlcNAc...) asparagine glycosylation. A glycan (N-linked (GlcNAc...) asparagine) is linked at Asn76.

Monomer.

The protein localises to the secreted. Its function is as follows. Salivary chemokine-binding protein which shows chemokine neutralizing activity and binds to host chemokines CXCL1, CXCL2, CXCL3, CXCL5, CXCL6 and CXCL8. Binds to CXCL8 with 1:1 stoichiometry. Disrupts CXCL8 homodimer formation, disrupts the glycosaminoglycan-binding site of CXCL8 and inhibits the interaction of CXCL8 with CXCR2. In Rhipicephalus sanguineus (Brown dog tick), this protein is Evasin-3.